The following is a 357-amino-acid chain: Glutamate 5-kinase (357 aa).

ATP is bound at residue Lys7. Substrate-binding residues include Ser43, Asp130, and Asn142. 162 to 163 (TD) serves as a coordination point for ATP. In terms of domain architecture, PUA spans 270–347 (QGELTLDAGA…PAAGPSPVVV (78 aa)).

It belongs to the glutamate 5-kinase family.

Its subcellular location is the cytoplasm. The catalysed reaction is L-glutamate + ATP = L-glutamyl 5-phosphate + ADP. Its pathway is amino-acid biosynthesis; L-proline biosynthesis; L-glutamate 5-semialdehyde from L-glutamate: step 1/2. Its function is as follows. Catalyzes the transfer of a phosphate group to glutamate to form L-glutamate 5-phosphate. The protein is Glutamate 5-kinase of Parasynechococcus marenigrum (strain WH8102).